Reading from the N-terminus, the 128-residue chain is Large ribosomal subunit protein bL20c (128 aa).

Belongs to the bacterial ribosomal protein bL20 family.

It is found in the plastid. Its subcellular location is the chloroplast. Binds directly to 23S ribosomal RNA and is necessary for the in vitro assembly process of the 50S ribosomal subunit. It is not involved in the protein synthesizing functions of that subunit. The sequence is that of Large ribosomal subunit protein bL20c from Nicotiana sylvestris (Wood tobacco).